A 153-amino-acid polypeptide reads, in one-letter code: SsrA-binding protein (153 aa).

The interval 129-153 (KREDMKKKDQSREMAQALRERSKSH) is disordered.

The protein belongs to the SmpB family.

It is found in the cytoplasm. In terms of biological role, required for rescue of stalled ribosomes mediated by trans-translation. Binds to transfer-messenger RNA (tmRNA), required for stable association of tmRNA with ribosomes. tmRNA and SmpB together mimic tRNA shape, replacing the anticodon stem-loop with SmpB. tmRNA is encoded by the ssrA gene; the 2 termini fold to resemble tRNA(Ala) and it encodes a 'tag peptide', a short internal open reading frame. During trans-translation Ala-aminoacylated tmRNA acts like a tRNA, entering the A-site of stalled ribosomes, displacing the stalled mRNA. The ribosome then switches to translate the ORF on the tmRNA; the nascent peptide is terminated with the 'tag peptide' encoded by the tmRNA and targeted for degradation. The ribosome is freed to recommence translation, which seems to be the essential function of trans-translation. This is SsrA-binding protein from Geobacter metallireducens (strain ATCC 53774 / DSM 7210 / GS-15).